The chain runs to 560 residues: Light-independent protochlorophyllide reductase subunit N (560 aa).

[4Fe-4S] cluster-binding residues include C24, C49, and C109. The span at 173–182 shows a compositional bias: low complexity; the sequence is NSLFNQSSNS. The disordered stretch occupies residues 173-210; the sequence is NSLFNQSSNSPENLKTLNTKKDTFQNSTENSKTFSAEK. Positions 196 to 206 are enriched in polar residues; sequence FQNSTENSKTF.

The protein belongs to the BchN/ChlN family. Protochlorophyllide reductase is composed of three subunits; ChlL, ChlN and ChlB. Forms a heterotetramer of two ChlB and two ChlN subunits. Requires [4Fe-4S] cluster as cofactor.

Its subcellular location is the plastid. It is found in the chloroplast. It carries out the reaction chlorophyllide a + oxidized 2[4Fe-4S]-[ferredoxin] + 2 ADP + 2 phosphate = protochlorophyllide a + reduced 2[4Fe-4S]-[ferredoxin] + 2 ATP + 2 H2O. It participates in porphyrin-containing compound metabolism; chlorophyll biosynthesis (light-independent). In terms of biological role, component of the dark-operative protochlorophyllide reductase (DPOR) that uses Mg-ATP and reduced ferredoxin to reduce ring D of protochlorophyllide (Pchlide) to form chlorophyllide a (Chlide). This reaction is light-independent. The NB-protein (ChlN-ChlB) is the catalytic component of the complex. The polypeptide is Light-independent protochlorophyllide reductase subunit N (Tetradesmus obliquus (Green alga)).